Consider the following 1052-residue polypeptide: Multidrug resistance protein MdtB (1052 aa).

The next 11 helical transmembrane spans lie at 15–37, 345–362, 367–389, 396–418, 438–460, 472–494, 535–557, 867–889, 909–931, 968–990, and 1000–1022; these read LFILRPVATTLFMIAILLAGIIG, FELLLAIALVVMVIYLFL, ATIIPSIAVPLSLVGTFAAMYFL, LTLMALTIATGFVVDDAIVVIEN, GEIGFTIISLTFSLIAVLIPLLF, FAVTLAVAILISAVVSLTLTPMM, HPWLTLSVAFSTLVLTVILYLLI, LWLIIAAIVAMYIVLGVLYESFI, LMLTGNELDVIAIIGIILLIGIV, ILMTTLAALFGALPLMLSTGVGA, and MVGGLIVSQVLTLFTTPVIYLLF. The interval 1032 to 1052 is disordered; the sequence is KNRHRDEDIDSSELLNGQEPQ.

It belongs to the resistance-nodulation-cell division (RND) (TC 2.A.6) family. MdtB subfamily. As to quaternary structure, part of a tripartite efflux system composed of MdtA, MdtB and MdtC. MdtB forms a heteromultimer with MdtC.

The protein localises to the cell inner membrane. This Yersinia pestis protein is Multidrug resistance protein MdtB.